Reading from the N-terminus, the 310-residue chain is Ribosomal RNA small subunit methyltransferase H (310 aa).

S-adenosyl-L-methionine-binding positions include 32 to 34 (AGH), Asp-51, Phe-78, Asp-99, and Gln-106.

This sequence belongs to the methyltransferase superfamily. RsmH family.

It is found in the cytoplasm. It catalyses the reaction cytidine(1402) in 16S rRNA + S-adenosyl-L-methionine = N(4)-methylcytidine(1402) in 16S rRNA + S-adenosyl-L-homocysteine + H(+). Functionally, specifically methylates the N4 position of cytidine in position 1402 (C1402) of 16S rRNA. The chain is Ribosomal RNA small subunit methyltransferase H from Macrococcus caseolyticus (strain JCSC5402) (Macrococcoides caseolyticum).